The following is a 319-amino-acid chain: Acetyl esterase (319 aa).

An Involved in the stabilization of the negatively charged intermediate by the formation of the oxyanion hole motif is present at residues 91 to 93 (HGG). Catalysis depends on residues Ser-165, Asp-262, and His-292.

The protein belongs to the 'GDXG' lipolytic enzyme family. As to quaternary structure, homodimer. Interacts with MalT and MelA.

It localises to the cytoplasm. Functionally, displays esterase activity towards short chain fatty esters (acyl chain length of up to 8 carbons). Able to hydrolyze triacetylglycerol (triacetin) and tributyrylglycerol (tributyrin), but not trioleylglycerol (triolein) or cholesterol oleate. Negatively regulates MalT activity by antagonizing maltotriose binding. Inhibits MelA galactosidase activity. The chain is Acetyl esterase from Shigella boydii serotype 18 (strain CDC 3083-94 / BS512).